Here is a 1081-residue protein sequence, read N- to C-terminus: FHF complex subunit HOOK-interacting protein 1A (1081 aa).

Disordered regions lie at residues 474-496 (SEEQ…PPPA), 544-623 (PETF…DPPK), 658-770 (EKDT…ENEP), and 863-883 (EAGS…RHPV). Residues 486-496 (PSSPSPPPPPA) show a composition bias toward pro residues. Residues 553 to 564 (EESRENSGHPEA) show a composition bias toward basic and acidic residues. The segment covering 567–576 (PQQSVRTSGQ) has biased composition (polar residues). The segment covering 680–707 (EPLEDTSEQQEDTSEQLEDTSELQEDTA) has biased composition (acidic residues). 2 stretches are compositionally biased toward polar residues: residues 727–738 (EAQSLPTSNGPL) and 746–762 (ESQP…NTFS).

This sequence belongs to the FHIP family. In terms of assembly, may be a component of the FTS/Hook/FHIP complex (FHF complex), composed of AKTIP/FTS, FHIP1B, and one or more members of the Hook family of proteins HOOK1, HOOK2, and HOOK3. May interact directly with AKTIP/FTS.

Its function is as follows. Probable component of the FTS/Hook/FHIP complex (FHF complex). FHF complex promotes the distribution of AP-4 complex to the perinuclear area of the cell. This chain is FHF complex subunit HOOK-interacting protein 1A, found in Mus musculus (Mouse).